We begin with the raw amino-acid sequence, 60 residues long: Large ribosomal subunit protein bL32 (60 aa).

It belongs to the bacterial ribosomal protein bL32 family.

The protein is Large ribosomal subunit protein bL32 of Thermosipho melanesiensis (strain DSM 12029 / CIP 104789 / BI429).